The following is a 137-amino-acid chain: Protein MesC (137 aa).

This Leuconostoc mesenteroides protein is Protein MesC (mesC).